Reading from the N-terminus, the 403-residue chain is Serine/threonine transporter SstT (403 aa).

The next 9 membrane-spanning stretches (helical) occupy residues 14–34 (VTQI…APAI), 44–64 (VFVS…VMAS), 79–99 (ILWL…VASM), 138–158 (ALLN…GVAL), 175–195 (GVTL…FGLV), 214–234 (LAVL…LIVF), 295–315 (MAGA…TLGI), 327–347 (VVAA…LLLI), and 353–373 (LFGI…IIGV).

The protein belongs to the dicarboxylate/amino acid:cation symporter (DAACS) (TC 2.A.23) family.

Its subcellular location is the cell inner membrane. The catalysed reaction is L-serine(in) + Na(+)(in) = L-serine(out) + Na(+)(out). It catalyses the reaction L-threonine(in) + Na(+)(in) = L-threonine(out) + Na(+)(out). Its function is as follows. Involved in the import of serine and threonine into the cell, with the concomitant import of sodium (symport system). In Pseudomonas putida (strain ATCC 700007 / DSM 6899 / JCM 31910 / BCRC 17059 / LMG 24140 / F1), this protein is Serine/threonine transporter SstT.